A 532-amino-acid polypeptide reads, in one-letter code: Probable G-protein coupled receptor Mth-like 11 (532 aa).

An N-terminal signal peptide occupies residues 1–20 (MGMFRVEYLLLGILVIGVRS). Residues 21–229 (RDIPNCDFFD…VRKSRLSNAS (209 aa)) are Extracellular-facing. Intrachain disulfides connect Cys26–Cys80, Cys82–Cys87, Cys91–Cys184, Cys92–Cys103, and Cys145–Cys204. The N-linked (GlcNAc...) asparagine glycan is linked to Asn42. Asn110, Asn123, Asn166, Asn195, and Asn227 each carry an N-linked (GlcNAc...) asparagine glycan. Residues 230-250 (IPVKFSSVFFMVITIAAYLWL) traverse the membrane as a helical segment. The Cytoplasmic portion of the chain corresponds to 251 to 262 (PKFRSLHGKCCN). The helical transmembrane segment at 263-283 (LYFICLAITFLLNVISLFGIF) threads the bilayer. Residues 284–290 (ELKTPIC) lie on the Extracellular side of the membrane. A helical transmembrane segment spans residues 291–311 (YLTGYAGYFTVMATFLWLSVI). At 312–339 (SFDVWRRFAMRKFQVFYKNKRSSFFNYN) the chain is on the cytoplasmic side. Residues 340-360 (IIVWSSAGLLTCIIFLVDQFV) traverse the membrane as a helical segment. The Extracellular portion of the chain corresponds to 361–386 (ETNLDNPYNPAVGVFSCWIFTNGWSA). The chain crosses the membrane as a helical span at residues 387-407 (TFYFYAPLAILIILNCASFFL). Over 408-439 (TTRYIYVENKQNQKVLNNSEPQKLSRNHANYR) the chain is Cytoplasmic. A helical membrane pass occupies residues 440 to 460 (IYFRLFIIMGGSWFLEIIAFI). At 461–469 (CEMENMWKP) the chain is on the extracellular side. Residues 470-490 (LIILNDYINCSQGIIIFVATF) form a helical membrane-spanning segment. Residues 491–532 (CNHEMFRLIRKRIQNRNITSLELTNTSRPVESEKMADVELGK) are Cytoplasmic-facing.

It belongs to the G-protein coupled receptor 2 family. Mth subfamily.

Its subcellular location is the cell membrane. The polypeptide is Probable G-protein coupled receptor Mth-like 11 (mthl11) (Drosophila melanogaster (Fruit fly)).